The primary structure comprises 198 residues: Holliday junction branch migration complex subunit RuvA (198 aa).

The domain I stretch occupies residues Met-1 to His-63. The tract at residues Thr-64 to Lys-142 is domain II. Residues Ala-143–Lys-147 are flexible linker. The domain III stretch occupies residues Ala-148 to Gly-198.

The protein belongs to the RuvA family. As to quaternary structure, homotetramer. Forms an RuvA(8)-RuvB(12)-Holliday junction (HJ) complex. HJ DNA is sandwiched between 2 RuvA tetramers; dsDNA enters through RuvA and exits via RuvB. An RuvB hexamer assembles on each DNA strand where it exits the tetramer. Each RuvB hexamer is contacted by two RuvA subunits (via domain III) on 2 adjacent RuvB subunits; this complex drives branch migration. In the full resolvosome a probable DNA-RuvA(4)-RuvB(12)-RuvC(2) complex forms which resolves the HJ.

It localises to the cytoplasm. In terms of biological role, the RuvA-RuvB-RuvC complex processes Holliday junction (HJ) DNA during genetic recombination and DNA repair, while the RuvA-RuvB complex plays an important role in the rescue of blocked DNA replication forks via replication fork reversal (RFR). RuvA specifically binds to HJ cruciform DNA, conferring on it an open structure. The RuvB hexamer acts as an ATP-dependent pump, pulling dsDNA into and through the RuvAB complex. HJ branch migration allows RuvC to scan DNA until it finds its consensus sequence, where it cleaves and resolves the cruciform DNA. This Streptococcus pyogenes serotype M12 (strain MGAS2096) protein is Holliday junction branch migration complex subunit RuvA.